The chain runs to 246 residues: NAD-dependent protein deacetylase (246 aa).

Residues 1–246 enclose the Deacetylase sirtuin-type domain; sequence MKMKEFLDLL…RRVMEEGGIS (246 aa). Positions 22, 26, 33, 34, 98, 100, 101, and 116 each coordinate NAD(+). Nicotinamide is bound at residue F33. Nicotinamide is bound by residues I100 and D101. The active-site Proton acceptor is H116. Positions 124, 127, 148, and 151 each coordinate Zn(2+). NAD(+) is bound by residues S189, S190, N214, L215, G216, D231, and V232.

This sequence belongs to the sirtuin family. Class U subfamily. The cofactor is Zn(2+).

It is found in the cytoplasm. The enzyme catalyses N(6)-acetyl-L-lysyl-[protein] + NAD(+) + H2O = 2''-O-acetyl-ADP-D-ribose + nicotinamide + L-lysyl-[protein]. Its activity is regulated as follows. Non-competitively inhibited by nicotinamide in vitro and in vivo, but not by nicotinic acid. Nicotinamide inhibits the deacetylation activity by reacting with a reaction intermediate. Its function is as follows. NAD-dependent protein deacetylase which modulates the activities of several enzymes which are inactive in their acetylated form. Also has depropionylation activity in vitro. Also able to ADP-ribosylate peptide substrates with Arg or Lys in the +2 position. The role of this function in vivo is not clear. The chain is NAD-dependent protein deacetylase from Thermotoga maritima (strain ATCC 43589 / DSM 3109 / JCM 10099 / NBRC 100826 / MSB8).